Here is a 475-residue protein sequence, read N- to C-terminus: Ribulose bisphosphate carboxylase large chain (475 aa).

Positions 1 to 2 (MA) are excised as a propeptide. P3 is subject to N-acetylproline. 2 residues coordinate substrate: N123 and T173. K175 functions as the Proton acceptor in the catalytic mechanism. Substrate is bound at residue K177. K201, D203, and E204 together coordinate Mg(2+). K201 bears the N6-carboxylysine mark. Catalysis depends on H294, which acts as the Proton acceptor. Substrate is bound by residues R295, H327, and S379.

Belongs to the RuBisCO large chain family. Type I subfamily. In terms of assembly, heterohexadecamer of 8 large chains and 8 small chains. Mg(2+) serves as cofactor.

It is found in the plastid. Its subcellular location is the chloroplast. It catalyses the reaction 2 (2R)-3-phosphoglycerate + 2 H(+) = D-ribulose 1,5-bisphosphate + CO2 + H2O. The enzyme catalyses D-ribulose 1,5-bisphosphate + O2 = 2-phosphoglycolate + (2R)-3-phosphoglycerate + 2 H(+). RuBisCO catalyzes two reactions: the carboxylation of D-ribulose 1,5-bisphosphate, the primary event in carbon dioxide fixation, as well as the oxidative fragmentation of the pentose substrate in the photorespiration process. Both reactions occur simultaneously and in competition at the same active site. In Ostreococcus tauri, this protein is Ribulose bisphosphate carboxylase large chain.